Consider the following 213-residue polypeptide: MRTIDKRIAPNVKLATALVARAPTLTLAYDARCKSRLAATLDTGEEVALVLPRGTVLRDGDVLVADDGALVRVAAAHEAVLLVRAPDALTLTRAAYHLGNRHTPVEVGAGCLKLEYDPVLADMLTRLGATIERANAPFQPEAGAYGGGHRHGHDATFAEDYALAQQVFDEHHGRSHSHSHSHSHDHDHDHDHDHDHDHQHGPSCSHGHGHGHR.

Residues 170 to 213 (EHHGRSHSHSHSHSHDHDHDHDHDHDHDHQHGPSCSHGHGHGHR) form a disordered region. The span at 182–200 (HSHDHDHDHDHDHDHDHQH) shows a compositional bias: basic and acidic residues.

This sequence belongs to the UreE family.

The protein resides in the cytoplasm. Functionally, involved in urease metallocenter assembly. Binds nickel. Probably functions as a nickel donor during metallocenter assembly. This is Urease accessory protein UreE from Burkholderia thailandensis (strain ATCC 700388 / DSM 13276 / CCUG 48851 / CIP 106301 / E264).